Here is a 100-residue protein sequence, read N- to C-terminus: MAKKALIQRELKRQKCVAQFAEKRKALKQAIKEASSLQEKLNLHRKLQQLPRNSSAVRLHNRCRVTGRPKGYFRDFGLSRHVLREMAHDCVLPGVTKSSF.

It belongs to the universal ribosomal protein uS14 family. As to quaternary structure, part of the 30S ribosomal subunit.

The protein resides in the plastid. The protein localises to the chloroplast. In terms of biological role, binds 16S rRNA, required for the assembly of 30S particles. The polypeptide is Small ribosomal subunit protein uS14c (Oltmannsiellopsis viridis (Marine flagellate)).